Here is a 164-residue protein sequence, read N- to C-terminus: Hoefavidin (164 aa).

The signal sequence occupies residues 1-22 (MNKVLAIVLTITVAGFAQTAFA). The Avidin-like domain maps to 32–155 (KLLAGASNWV…GQDDFMQSVA (124 aa)). The biotin site is built by N42, S46, Y68, N70, and G76. C77 and C108 are disulfide-bonded. Biotin is bound by residues S110, T112, and D148.

It belongs to the avidin/streptavidin family. As to quaternary structure, exhibits a dynamic oligomeric assembly: the apo form exits as homooctamers, which dissociate into homodimers upon biotin binding. The X-ray structure of the intact hoefavidin reveals unique crystal packing generated by an octameric cylindrical structure wherein the C-terminal segments of each monomer are introduced into the entrance of the biotin-binding site of an adjacent non-canonical monomer.

The protein resides in the secreted. Functionally, the exact role played by hoefavidin in the host organism is still obscure. Forms a strong non-covalent complex with biotin and 2-iminobiotin. This is Hoefavidin from Hoeflea phototrophica (strain DSM 17068 / NCIMB 14078 / DFL-43).